A 481-amino-acid polypeptide reads, in one-letter code: Exodeoxyribonuclease I (481 aa).

In terms of domain architecture, Exonuclease spans 12–193; sequence LFYDYETFGK…SSDVYATMNI (182 aa). Mg(2+)-binding residues include aspartate 15, glutamate 17, and aspartate 186. A substrate-binding site is contributed by glutamate 17. The 149-residue stretch at 202-350 folds into the ExoI SH3-like domain; the sequence is PKLFNFFFKY…KLKKFLCSIA (149 aa). Positions 356–471 constitute an ExoI C-terminal domain; sequence NGSNVDLKMY…ELFEYVKYTR (116 aa).

As to quaternary structure, monomer. Interacts with ssb (via C-terminus); this interaction stimulates the exonuclease activity by recruiting the enzyme to its substrate. The cofactor is Mg(2+).

The catalysed reaction is Exonucleolytic cleavage in the 3'- to 5'-direction to yield nucleoside 5'-phosphates.. Its function is as follows. Degrades single-stranded DNA (ssDNA) in a highly processive manner. Also functions as a DNA deoxyribophosphodiesterase that releases deoxyribose-phosphate moieties following the cleavage of DNA at an apurinic/apyrimidinic (AP) site by either an AP endonuclease or AP lyase. The protein is Exodeoxyribonuclease I (sbcB) of Buchnera aphidicola subsp. Baizongia pistaciae (strain Bp).